The following is a 151-amino-acid chain: U1 small nuclear ribonucleoprotein C (151 aa).

The Matrin-type zinc-finger motif lies at 4–36; sequence YYCDYCDTYLTHDSPSVRKTHCTGRKHKDNVKF.

The protein belongs to the U1 small nuclear ribonucleoprotein C family. As to quaternary structure, U1 snRNP is composed of the 7 core Sm proteins B/B', D1, D2, D3, E, F and G that assemble in a heptameric protein ring on the Sm site of the small nuclear RNA to form the core snRNP, and at least 3 U1 snRNP-specific proteins U1-70K, U1-A and U1-C. U1-C interacts with U1 snRNA and the 5' splice-site region of the pre-mRNA.

It localises to the nucleus. Its function is as follows. Component of the spliceosomal U1 snRNP, which is essential for recognition of the pre-mRNA 5' splice-site and the subsequent assembly of the spliceosome. U1-C is directly involved in initial 5' splice-site recognition for both constitutive and regulated alternative splicing. The interaction with the 5' splice-site seems to precede base-pairing between the pre-mRNA and the U1 snRNA. Stimulates commitment or early (E) complex formation by stabilizing the base pairing of the 5' end of the U1 snRNA and the 5' splice-site region. In Anopheles darlingi (Mosquito), this protein is U1 small nuclear ribonucleoprotein C.